The chain runs to 379 residues: Histidinol-phosphate aminotransferase (379 aa).

N6-(pyridoxal phosphate)lysine is present on lysine 231.

It belongs to the class-II pyridoxal-phosphate-dependent aminotransferase family. Histidinol-phosphate aminotransferase subfamily. As to quaternary structure, homodimer. Pyridoxal 5'-phosphate serves as cofactor.

The enzyme catalyses L-histidinol phosphate + 2-oxoglutarate = 3-(imidazol-4-yl)-2-oxopropyl phosphate + L-glutamate. The protein operates within amino-acid biosynthesis; L-histidine biosynthesis; L-histidine from 5-phospho-alpha-D-ribose 1-diphosphate: step 7/9. The polypeptide is Histidinol-phosphate aminotransferase (Mycolicibacterium smegmatis (strain ATCC 700084 / mc(2)155) (Mycobacterium smegmatis)).